A 293-amino-acid chain; its full sequence is Nucleotide-binding protein LBA0691 (293 aa).

13–20 (GMSGAGKT) lines the ATP pocket. Residue 63–66 (DLRV) participates in GTP binding.

It belongs to the RapZ-like family.

Displays ATPase and GTPase activities. This is Nucleotide-binding protein LBA0691 from Lactobacillus acidophilus (strain ATCC 700396 / NCK56 / N2 / NCFM).